The sequence spans 611 residues: MGKQGSPRSPRPETIDKEEKFGRRSLDSLSGNDLLLGRRIYASEVSKAQGSKHDQSSGSSNKFWKKQHSWLRRNFKSIVLMISVTGFIFCMDSIMVSIFHSDSRAVVQDISRLSNMTLHKNGAVDASPVQMYSRLLNLASDSLAKNEFKPDTPNFREERSSKSSQWKPCADNNKAAVALERSRELSNGYIMVSANGGLNQQRVAICNAVAVAALLNATLVLPRFLYSNVWKDPSQFGDIYQEDHFIEYLKDEVNIVKNLPQHLKSTDNKNLSLVTDTELVKEATPVDYIEHVLPLLKKYGMVHLFGYGNRLGFDPLPFDVQRLRCKCNFHALKFAPKIQEAGSLLVKRIRRFKTSRSRLEEALLGESMVKSTVKGEEEPLKYLALHLRFEEDMVAYSLCDFGGGEAERKELQAYREDHFPLLLKRLKKSKPVSPEELRKTGKCPLTPEEATLVLAGLGFKRKTYIYLAGSQIYGGSSRMLPLTRLYPNIATKETLLTPQELAPFKNFSSQLAALDFIACIASDVFAMTDSGSQLSSLVSGFRNYYGNGQAPTLRPNKKRLAAILSDSETIKWKIFEDRVRKMVEEGQKLRTRPYGRSIYRQPRCPECMCKF.

The tract at residues 1-29 (MGKQGSPRSPRPETIDKEEKFGRRSLDSL) is disordered. Over residues 10–26 (PRPETIDKEEKFGRRSL) the composition is skewed to basic and acidic residues. A helical; Signal-anchor for type II membrane protein transmembrane segment spans residues 78-98 (IVLMISVTGFIFCMDSIMVSI). N-linked (GlcNAc...) asparagine glycans are attached at residues asparagine 115, asparagine 216, and asparagine 270. 386-388 (HLR) contacts substrate. Residue asparagine 506 is glycosylated (N-linked (GlcNAc...) asparagine).

The protein belongs to the glycosyltransferase GT106 family.

Its subcellular location is the membrane. It functions in the pathway glycan metabolism. The chain is O-fucosyltransferase 8 from Arabidopsis thaliana (Mouse-ear cress).